Reading from the N-terminus, the 648-residue chain is Transketolase (648 aa).

His22 lines the substrate pocket. Thiamine diphosphate contacts are provided by residues His62 and 109–111 (GPL). Asp150 contributes to the Mg(2+) binding site. Thiamine diphosphate is bound by residues Gly151 and Asn180. Residues Asn180 and Val182 each contribute to the Mg(2+) site. Residues His252, Arg345, and Ser372 each contribute to the substrate site. His252 lines the thiamine diphosphate pocket. Glu397 functions as the Proton donor in the catalytic mechanism. Position 423 (Phe423) interacts with thiamine diphosphate. 3 residues coordinate substrate: His447, Asp455, and Arg506.

It belongs to the transketolase family. In terms of assembly, homodimer. Mg(2+) is required as a cofactor. It depends on Ca(2+) as a cofactor. Mn(2+) serves as cofactor. Requires Co(2+) as cofactor. The cofactor is thiamine diphosphate.

The catalysed reaction is D-sedoheptulose 7-phosphate + D-glyceraldehyde 3-phosphate = aldehydo-D-ribose 5-phosphate + D-xylulose 5-phosphate. Functionally, catalyzes the transfer of a two-carbon ketol group from a ketose donor to an aldose acceptor, via a covalent intermediate with the cofactor thiamine pyrophosphate. This chain is Transketolase (tkt), found in Mycoplasma genitalium (strain ATCC 33530 / DSM 19775 / NCTC 10195 / G37) (Mycoplasmoides genitalium).